Here is a 94-residue protein sequence, read N- to C-terminus: ESAT-6-like protein EsxO (94 aa).

This sequence belongs to the WXG100 family. ESAT-6 subfamily. Forms a complex with EsxP.

It is found in the secreted. The chain is ESAT-6-like protein EsxO from Mycobacterium tuberculosis (strain CDC 1551 / Oshkosh).